The chain runs to 100 residues: Ubiquinol-cytochrome-C reductase complex subunit IX, mitochondrial (100 aa).

A mitochondrion-targeting transit peptide spans 1 to 30; the sequence is MQTHVRRVALQALRPCLRAGLMAPKFPVRF. The chain crosses the membrane as a helical span at residues 66–86; it reads LLMRLFFAFVAYVVAMKVFGA.

As to quaternary structure, plants bc1 complex contains 10 subunits; 3 respiratory subunits, 2 core proteins and 5 low-molecular weight proteins.

It is found in the mitochondrion inner membrane. Functionally, this is a component of the ubiquinol-cytochrome c reductase complex (complex III or cytochrome b-c1 complex), which is part of the mitochondrial respiratory chain. The protein is Ubiquinol-cytochrome-C reductase complex subunit IX, mitochondrial of Euglena gracilis.